The primary structure comprises 294 residues: N-acetylmuramic acid 6-phosphate etherase (294 aa).

In terms of domain architecture, SIS spans 54 to 217; it reads VIKSFEEEGR…STASMIGVGK (164 aa). Glu82 functions as the Proton donor in the catalytic mechanism. Glu113 is a catalytic residue.

This sequence belongs to the GCKR-like family. MurNAc-6-P etherase subfamily. In terms of assembly, homodimer.

It catalyses the reaction N-acetyl-D-muramate 6-phosphate + H2O = N-acetyl-D-glucosamine 6-phosphate + (R)-lactate. It participates in amino-sugar metabolism; N-acetylmuramate degradation. In terms of biological role, specifically catalyzes the cleavage of the D-lactyl ether substituent of MurNAc 6-phosphate, producing GlcNAc 6-phosphate and D-lactate. This Bacillus cereus (strain B4264) protein is N-acetylmuramic acid 6-phosphate etherase.